A 244-amino-acid chain; its full sequence is Methylthioribulose-1-phosphate dehydratase (244 aa).

A substrate-binding site is contributed by C89. Residues H107 and H109 each contribute to the Zn(2+) site. Catalysis depends on E130, which acts as the Proton donor/acceptor. Residue H192 participates in Zn(2+) binding.

It belongs to the aldolase class II family. MtnB subfamily. Zn(2+) serves as cofactor.

It localises to the cytoplasm. The catalysed reaction is 5-(methylsulfanyl)-D-ribulose 1-phosphate = 5-methylsulfanyl-2,3-dioxopentyl phosphate + H2O. Its pathway is amino-acid biosynthesis; L-methionine biosynthesis via salvage pathway; L-methionine from S-methyl-5-thio-alpha-D-ribose 1-phosphate: step 2/6. Catalyzes the dehydration of methylthioribulose-1-phosphate (MTRu-1-P) into 2,3-diketo-5-methylthiopentyl-1-phosphate (DK-MTP-1-P). The sequence is that of Methylthioribulose-1-phosphate dehydratase from Saccharomyces cerevisiae (strain YJM789) (Baker's yeast).